The following is a 445-amino-acid chain: Na(+)-translocating NADH-quinone reductase subunit A (445 aa).

It belongs to the NqrA family. As to quaternary structure, composed of six subunits; NqrA, NqrB, NqrC, NqrD, NqrE and NqrF.

The enzyme catalyses a ubiquinone + n Na(+)(in) + NADH + H(+) = a ubiquinol + n Na(+)(out) + NAD(+). NQR complex catalyzes the reduction of ubiquinone-1 to ubiquinol by two successive reactions, coupled with the transport of Na(+) ions from the cytoplasm to the periplasm. NqrA to NqrE are probably involved in the second step, the conversion of ubisemiquinone to ubiquinol. This Teredinibacter turnerae (strain ATCC 39867 / T7901) protein is Na(+)-translocating NADH-quinone reductase subunit A.